A 434-amino-acid polypeptide reads, in one-letter code: Prenyltransferase penG (434 aa).

Polar residues-rich tracts occupy residues 1 to 14 (MTQDVVTVSSQTAG) and 21 to 35 (THSNPDNKTTSPSTW). Residues 1-35 (MTQDVVTVSSQTAGTIKESGTHSNPDNKTTSPSTW) are disordered. Residues 104-105 (EI) and Glu108 contribute to the L-tryptophan site. The substrate site is built by Arg122, Lys208, Arg275, Lys277, Tyr279, and Tyr348.

It belongs to the tryptophan dimethylallyltransferase family.

The catalysed reaction is yaequinolone E + dimethylallyl diphosphate + H2O = [(1'E)-3'-hydroxy-3',7'-dimethylocta-1',6'-dien-1'-yl]-quinolinone B + diphosphate. Its pathway is secondary metabolite biosynthesis. It functions in the pathway alkaloid biosynthesis. It participates in mycotoxin biosynthesis. Its function is as follows. Prenyltransferase; part of the gene cluster that mediates the biosynthesis of penigequinolones, potent insecticidal alkaloids that contain a highly modified 10-carbon prenyl group. The first stage is catalyzed by the nonribosomal peptide synthetase penN that condenses anthranilic acid and O-methyl-L-tyrosine to produce 4'-methoxycyclopeptin. 4'-methoxycyclopeptin is then converted to 4'-methoxydehydrocyclopeptin by the ketoglutarate-dependent dioxygenase penM through dehydrogenation to form a double bond between C-alpha and C-beta of the O-methyltyrosine side chain. PenM also converts its first product methoxydehydrocyclopeptin to 4'-methoxycyclopenin. The following conversion of 4'methoxycyclopenin into 4'-methoxyviridicatin is catalyzed by the cyclopenase penL. 4'-methoxyviridicatin is the precursor of quinolone natural products, and is further converted to quinolinone B. The prenyltransferase penI then catalyzes the canonical Friedel-Crafts alkylation of quinolinone B with dimethylallyl cation to yield dimethylallyl quinolone, which is subjected to FAD-dependent dehydrogenation by the FAD-linked oxidoreductase penH to yield conjugated aryl diene. The delta(3') double bond then serves as the site of the second alkylation with DMAPP catalyzed by the prenyltransferase penG to yield a carbenium ion intermediate, which can be attacked by H(2)O to yield a styrenyl quinolone containing a C3'-hydroxyprenyl chain, or undergo cyclization to yield yaequinolones J1 and J2. The conversion of the styrenyl quinolone into the tetrahydrofuran-containing yaequinolone C is performed by the FAD-dependent monooxygenase penE and involves epoxidation of the terminal C7'-C8' olefin, followed by epoxide ring opening initiated by the C3' hydroxyl group. The predicted cysteine hydrolase penJ acts as an epoxide hydrolase that enhances the rate of the 5-exo-tet cyclization step, increasing the yield of yaequinolone C. PenF catalyzes the cationic rearrangement of the epoxide formed by penE (before ring opening to produce yaequinolone C) into yaequinolone D. Finally, the short-chain dehydrogenase/reductase (SDR)-like reductase penD, catalyzes both the dehydration of yaequinolone D and the reduction of the resulting oxonium to yield penigequinolone. In Penicillium thymicola, this protein is Prenyltransferase penG.